The following is a 241-amino-acid chain: Pyridoxine 5'-phosphate synthase (241 aa).

N7 lines the 3-amino-2-oxopropyl phosphate pocket. 9 to 10 (DH) contacts 1-deoxy-D-xylulose 5-phosphate. Residue R18 coordinates 3-amino-2-oxopropyl phosphate. The Proton acceptor role is filled by H43. R45 and H50 together coordinate 1-deoxy-D-xylulose 5-phosphate. E70 (proton acceptor) is an active-site residue. Position 100 (T100) interacts with 1-deoxy-D-xylulose 5-phosphate. Residue H191 is the Proton donor of the active site. Residues G192 and 213–214 (GH) each bind 3-amino-2-oxopropyl phosphate.

It belongs to the PNP synthase family. In terms of assembly, homooctamer; tetramer of dimers.

The protein localises to the cytoplasm. The catalysed reaction is 3-amino-2-oxopropyl phosphate + 1-deoxy-D-xylulose 5-phosphate = pyridoxine 5'-phosphate + phosphate + 2 H2O + H(+). Its pathway is cofactor biosynthesis; pyridoxine 5'-phosphate biosynthesis; pyridoxine 5'-phosphate from D-erythrose 4-phosphate: step 5/5. Functionally, catalyzes the complicated ring closure reaction between the two acyclic compounds 1-deoxy-D-xylulose-5-phosphate (DXP) and 3-amino-2-oxopropyl phosphate (1-amino-acetone-3-phosphate or AAP) to form pyridoxine 5'-phosphate (PNP) and inorganic phosphate. The protein is Pyridoxine 5'-phosphate synthase of Solidesulfovibrio magneticus (strain ATCC 700980 / DSM 13731 / RS-1) (Desulfovibrio magneticus).